A 94-amino-acid chain; its full sequence is Small ribosomal subunit protein uS19 (94 aa).

The disordered stretch occupies residues 75-94 (SHTRTFKGHAGDKKAAGSKR). The span at 83–94 (HAGDKKAAGSKR) shows a compositional bias: basic and acidic residues.

It belongs to the universal ribosomal protein uS19 family.

Its function is as follows. Protein S19 forms a complex with S13 that binds strongly to the 16S ribosomal RNA. This Nitrosomonas europaea (strain ATCC 19718 / CIP 103999 / KCTC 2705 / NBRC 14298) protein is Small ribosomal subunit protein uS19.